Here is a 167-residue protein sequence, read N- to C-terminus: Peptide deformylase (167 aa).

Positions 91 and 133 each coordinate Fe cation. Glu-134 is an active-site residue. His-137 provides a ligand contact to Fe cation.

Belongs to the polypeptide deformylase family. Fe(2+) is required as a cofactor.

It carries out the reaction N-terminal N-formyl-L-methionyl-[peptide] + H2O = N-terminal L-methionyl-[peptide] + formate. Functionally, removes the formyl group from the N-terminal Met of newly synthesized proteins. Requires at least a dipeptide for an efficient rate of reaction. N-terminal L-methionine is a prerequisite for activity but the enzyme has broad specificity at other positions. This Pseudoalteromonas translucida (strain TAC 125) protein is Peptide deformylase.